The following is a 234-amino-acid chain: Probable Ufm1-specific protease 1 (234 aa).

Catalysis depends on residues Cys-70, Asp-194, and His-196.

Belongs to the peptidase C78 family.

Thiol protease which recognizes and hydrolyzes the peptide bond at the C-terminal Gly of UFM1, a ubiquitin-like modifier protein bound to a number of target proteins. In Drosophila melanogaster (Fruit fly), this protein is Probable Ufm1-specific protease 1.